We begin with the raw amino-acid sequence, 622 residues long: Carbon monoxide dehydrogenase (622 aa).

Positions 40, 49, 52, 57, and 68 each coordinate [4Fe-4S] cluster. Residues His-256, Cys-334, Cys-442, Cys-473, and Cys-514 each contribute to the [Ni-4Fe-5S] cluster site.

Belongs to the Ni-containing carbon monoxide dehydrogenase family. As to quaternary structure, homodimer. [4Fe-4S] cluster serves as cofactor. [Ni-4Fe-5S] cluster is required as a cofactor.

It carries out the reaction CO + 2 oxidized [2Fe-2S]-[ferredoxin] + H2O = 2 reduced [2Fe-2S]-[ferredoxin] + CO2 + 2 H(+). CODH oxidizes carbon monoxide coupled, via CooF, to the reduction of a hydrogen cation by a hydrogenase (possibly CooH). The protein is Carbon monoxide dehydrogenase (cooS) of Archaeoglobus fulgidus (strain ATCC 49558 / DSM 4304 / JCM 9628 / NBRC 100126 / VC-16).